Consider the following 442-residue polypeptide: Prenyltransferase nscD (442 aa).

It belongs to the tryptophan dimethylallyltransferase family.

It participates in secondary metabolite biosynthesis. Functionally, prenyltransferase; part of the gene cluster that mediates the biosynthesis of neosartoricin B, a prenylated anthracenone that probably exhibits T-cell antiproliferative activity, suggestive of a physiological role as an immunosuppressive agent. The non-reducing polyketide synthase nscA probably synthesizes and cyclizes the decaketide backbone. The hydrolase nscB then mediates the product release through hydrolysis followed by spontaneous decarboxylation. The prenyltransferase nscD catalyzes the addition of the dimethylallyl group to the aromatic C5. The FAD-dependent monooxygenase nscC is then responsible for the stereospecific hydroxylation at C2. Neosartoricin B can be converted into two additional compounds neosartoricins C and D. Neosartoricin C is a spirocyclic compound that is cyclized through the attack of C3 hydroxyl on C14, followed by dehydration. On the other hand, neosartoricin D is a further cyclized compound in which attack of C2 on C14 in neosartoricin C results in the formation of the acetal-containing dioxabicyclo-octanone ring. Both of these compounds are novel and possibly represent related metabolites of the gene cluster. The chain is Prenyltransferase nscD from Trichophyton verrucosum (strain HKI 0517).